The sequence spans 493 residues: D-glyceraldehyde dehydrogenase (NADP(+)) (493 aa).

Residues 144-147, R155, 170-174, 202-208, 223-246, C279, and 379-381 contribute to the NADP(+) site; these read TPWN, KPSSD, KGSEIGD, GSTS…ILEL, and EIF. Substrate contacts are provided by N147 and R155. E245 (proton acceptor) is an active-site residue. Residue C279 coordinates substrate. C279 acts as the Proton donor in catalysis.

This sequence belongs to the aldehyde dehydrogenase family. Glyceraldehyde dehydrogenase subfamily. Homotetramer. Dimer of dimers.

It catalyses the reaction D-glyceraldehyde + NADP(+) + H2O = (R)-glycerate + NADPH + 2 H(+). It functions in the pathway carbohydrate degradation; glycolysis. With respect to regulation, stable for 2 hours at 60 degrees Celsius but activity is decreased to less than 50 percent within 15 minutes at 70 degrees Celsius. Its function is as follows. NADP-dependent dehydrogenase of the nED (non-phosphorylated Entner-Doudoroff) pathway with highest activity towards glyceraldehydes (e.g. D,L-glyceraldehyde and D-glyceraldehyde), to a lesser extent towards D,L-glyceraldehyde-3-phosphate and glycolaldehyde, but no activity towards aliphatic or aromatic aldehydes. The chain is D-glyceraldehyde dehydrogenase (NADP(+)) from Picrophilus torridus (strain ATCC 700027 / DSM 9790 / JCM 10055 / NBRC 100828 / KAW 2/3).